Here is a 172-residue protein sequence, read N- to C-terminus: Large ribosomal subunit protein uL10 (172 aa).

It belongs to the universal ribosomal protein uL10 family. As to quaternary structure, part of the ribosomal stalk of the 50S ribosomal subunit. The N-terminus interacts with L11 and the large rRNA to form the base of the stalk. The C-terminus forms an elongated spine to which L12 dimers bind in a sequential fashion forming a multimeric L10(L12)X complex.

Its function is as follows. Forms part of the ribosomal stalk, playing a central role in the interaction of the ribosome with GTP-bound translation factors. The sequence is that of Large ribosomal subunit protein uL10 from Francisella tularensis subsp. holarctica (strain FTNF002-00 / FTA).